Consider the following 173-residue polypeptide: ATP-dependent protease subunit HslV (173 aa).

Thr2 is an active-site residue. Positions 158, 161, and 164 each coordinate Na(+).

This sequence belongs to the peptidase T1B family. HslV subfamily. In terms of assembly, a double ring-shaped homohexamer of HslV is capped on each side by a ring-shaped HslU homohexamer. The assembly of the HslU/HslV complex is dependent on binding of ATP.

The protein resides in the cytoplasm. The enzyme catalyses ATP-dependent cleavage of peptide bonds with broad specificity.. With respect to regulation, allosterically activated by HslU binding. Its function is as follows. Protease subunit of a proteasome-like degradation complex believed to be a general protein degrading machinery. This is ATP-dependent protease subunit HslV from Glaesserella parasuis serovar 5 (strain SH0165) (Haemophilus parasuis).